A 236-amino-acid chain; its full sequence is Putative lipoprotein MlpA (236 aa).

An N-terminal signal peptide occupies residues 1–21; it reads MTKNIVNTALVLVGAGSLLTG. Cys-22 carries N-palmitoyl cysteine lipidation. Residue Cys-22 is the site of S-diacylglycerol cysteine attachment.

It is found in the cell membrane. In Myxococcus xanthus, this protein is Putative lipoprotein MlpA (mlpA).